The primary structure comprises 536 residues: Hydroxylamine oxidoreductase (536 aa).

Residues 1 to 26 (MFEIFKKPLSRIVGATFAFAGVTLLA) form the signal peptide. Positions 116, 119, 120, 136, 160, 163, 164, 168, 179, 182, 183, 198, 223, 226, 227, 234, 237, 238, 241, 254, 257, and 258 each coordinate heme c. His263 is a binding site for hydroxylamine. Heme c-binding residues include His274, Cys301, Cys304, His305, His311, Cys346, Cys349, His350, His443, and Tyr451.

Homotrimer; subunits are linked by two covalent bonds between Tyr-451 of one subunit and heme P460 of an adjacent subunit. Heme c is required as a cofactor.

The protein resides in the anammoxosome. It catalyses the reaction hydroxylamine + 3 Fe(III)-[cytochrome c] = nitric oxide + 3 Fe(II)-[cytochrome c] + 3 H(+). In terms of biological role, catalyzes the oxidation of hydroxylamine to nitric oxide with cytochrome c acting as an electron acceptor. Does not oxidize hydroxylamine to nitrite. Also able to catalyze the four-electron oxidation of hydrazine to N(2) in vitro with reduced efficiency; however, this reaction is probably not physiological. This chain is Hydroxylamine oxidoreductase, found in Kuenenia stuttgartiensis.